Reading from the N-terminus, the 270-residue chain is Probable ribosomal RNA small subunit methyltransferase A (270 aa).

S-adenosyl-L-methionine is bound by residues histidine 19, leucine 21, glycine 46, glutamate 67, aspartate 92, and asparagine 107.

Belongs to the class I-like SAM-binding methyltransferase superfamily. rRNA adenine N(6)-methyltransferase family. RsmA subfamily.

It localises to the cytoplasm. In terms of biological role, specifically dimethylates two adjacent adenosines in the loop of a conserved hairpin near the 3'-end of 16S rRNA in the 30S particle. May play a critical role in biogenesis of 30S subunits. The protein is Probable ribosomal RNA small subunit methyltransferase A of Methanococcoides burtonii (strain DSM 6242 / NBRC 107633 / OCM 468 / ACE-M).